The sequence spans 800 residues: Elongation factor G, mitochondrial (800 aa).

A mitochondrion-targeting transit peptide spans 1–59; that stretch reads MRVIRAVATLHAGRAAAVRQGVRSVSLGACRAAVETPSLRSAGSQFESRRLFSRSSYLR. Residues 99–385 form the tr-type G domain; the sequence is ARVRNIGIAA…AVCDYLPNPN (287 aa). GTP-binding positions include 108-115, 183-187, and 237-240; these read AHIDSGKT, DTPGH, and NKMD.

The protein belongs to the TRAFAC class translation factor GTPase superfamily. Classic translation factor GTPase family. EF-G/EF-2 subfamily.

The protein localises to the mitochondrion. It functions in the pathway protein biosynthesis; polypeptide chain elongation. Mitochondrial GTPase that catalyzes the GTP-dependent ribosomal translocation step during translation elongation. During this step, the ribosome changes from the pre-translocational (PRE) to the post-translocational (POST) state as the newly formed A-site-bound peptidyl-tRNA and P-site-bound deacylated tRNA move to the P and E sites, respectively. Catalyzes the coordinated movement of the two tRNA molecules, the mRNA and conformational changes in the ribosome. This is Elongation factor G, mitochondrial (mef1) from Neurospora crassa (strain ATCC 24698 / 74-OR23-1A / CBS 708.71 / DSM 1257 / FGSC 987).